Reading from the N-terminus, the 269-residue chain is tRNA (guanine-N(7)-)-methyltransferase (269 aa).

The tract at residues 1-38 (MDGVNDAANHTVESVPGRPSTASAPLEAGRRSPTGSRL) is disordered. Glu-91, Glu-116, Asp-143, and Asp-166 together coordinate S-adenosyl-L-methionine. The active site involves Asp-166. Substrate-binding positions include Lys-170, Asp-202, and 247-250 (TKFE).

Belongs to the class I-like SAM-binding methyltransferase superfamily. TrmB family.

The enzyme catalyses guanosine(46) in tRNA + S-adenosyl-L-methionine = N(7)-methylguanosine(46) in tRNA + S-adenosyl-L-homocysteine. It functions in the pathway tRNA modification; N(7)-methylguanine-tRNA biosynthesis. In terms of biological role, catalyzes the formation of N(7)-methylguanine at position 46 (m7G46) in tRNA. The sequence is that of tRNA (guanine-N(7)-)-methyltransferase from Nocardia farcinica (strain IFM 10152).